We begin with the raw amino-acid sequence, 257 residues long: Hydroxyacylglutathione hydrolase (257 aa).

Residues H58, H60, D62, H63, H116, D135, and H173 each contribute to the Zn(2+) site.

This sequence belongs to the metallo-beta-lactamase superfamily. Glyoxalase II family. Monomer. It depends on Zn(2+) as a cofactor.

It carries out the reaction an S-(2-hydroxyacyl)glutathione + H2O = a 2-hydroxy carboxylate + glutathione + H(+). It functions in the pathway secondary metabolite metabolism; methylglyoxal degradation; (R)-lactate from methylglyoxal: step 2/2. Thiolesterase that catalyzes the hydrolysis of S-D-lactoyl-glutathione to form glutathione and D-lactic acid. In Brucella melitensis biotype 1 (strain ATCC 23456 / CCUG 17765 / NCTC 10094 / 16M), this protein is Hydroxyacylglutathione hydrolase.